Reading from the N-terminus, the 232-residue chain is Large ribosomal subunit protein uL1 (232 aa).

The protein belongs to the universal ribosomal protein uL1 family. Part of the 50S ribosomal subunit.

Binds directly to 23S rRNA. The L1 stalk is quite mobile in the ribosome, and is involved in E site tRNA release. Its function is as follows. Protein L1 is also a translational repressor protein, it controls the translation of the L11 operon by binding to its mRNA. This is Large ribosomal subunit protein uL1 from Xanthomonas oryzae pv. oryzae (strain MAFF 311018).